Reading from the N-terminus, the 521-residue chain is MTIKTKAELLNKWKPLLEGEGLPEIANSKQAIIAKIFENQEKDFQTAPEYKDEKIAQAFGSFLTEAEIGGDHGYNATNIAAGQTSGAVTQIGPAVMGMVRRAIPNLIAFDICGVQPMNSPTGQVFALRAVYGKDPVAAGAKEAFHPMYGPDAMFSGQGAAKKFPALAASTQTTVGDIYTHFFQETGTVYLQASVQVTIDAGATDAAKLDAEIKKQMEAGALVEIAEGMATSIAELQEGFNGSTDNPWNEMGFRIDKQVIEAKSRQLKAAYSIELAQDLRAVHGMDADAELSGILATEIMLEINREVVDWINYSAQVGKSGMTLTPGSKAGVFDFQDPIDIRGARWAGESFKALLFQIDKEAVEIARQTGRGEGNFIIASRNVVNVLASVDTGISYAAQGLATGFSTDTTKSVFAGVLGGKYRVYIDQYAKQDYFTVGYKGPNEMDAGIYYAPYVALTPLRGSDPKNFQPVMGFKTRYGIGINPFAESAAQAPASRIQSGMPSILNSLGKNAYFRRVYVKGI.

Belongs to the Tevenvirinae major capsid protein family. As to quaternary structure, homohexamer. Interacts with the portal protein. Interacts with the capsid vertex protein that forms pentamers. Interacts with hoc; one hoc molecule associates with each capsid hexamer. Interacts with soc; this interaction reinforces the capsid structure. A total of 960 subunits of the major capsid protein forms the 160 hexamers. In terms of processing, a proteolytic cleavage by the prohead core protein protease gives rise to the mature major capsid protein during virus maturation.

Its subcellular location is the virion. Functionally, major capsid protein that self-associates to form hexamers, building most of the capsid in association with pentons made of the capsid vertex protein and one dodecamer of the portal protein. The major capsid protein self-associates to form 160 hexamers, building most of the T=13 laevo capsid. Folding of major capsid protein requires the assistance of two chaperones, the host chaperone groL acting with the phage encoded gp23-specific chaperone, gp31. The capsid also contains two nonessential outer capsid proteins, Hoc and Soc, which decorate the capsid surface. Through binding to adjacent gp23 subunits, Soc reinforces the capsid structure. In Escherichia coli (Bacteriophage T4), this protein is Major capsid protein (gp23).